Consider the following 504-residue polypeptide: Probable ergothioneine transporter EgtUBC (504 aa).

Residues 19 to 198 (LVQHIQISFV…LLAILFDFLL (180 aa)) enclose the ABC transmembrane type-1 domain. Transmembrane regions (helical) follow at residues 25–44 (ISFV…GIYL), 57–74 (VAAI…GLLI), 81–97 (IVPA…LPIL), 146–170 (MVLI…LILL), 179–198 (LILL…DFLL), and 210–229 (IITI…VPYF). Positions 231 to 504 (SDKKEITIAG…DYLKDQGIIK (274 aa)) are ergothioneine binding domain.

It in the N-terminal section; belongs to the binding-protein-dependent transport system permease family. In the C-terminal section; belongs to the OsmX family. In terms of assembly, the complex is probably composed of at least an ATP-binding protein (EgtUA) and a transmembrane protein (EgtUBC).

It localises to the membrane. Its function is as follows. Part of an ABC transporter complex EgtU required for the uptake of ergothioneine (EGT), a natural low-molecular weight (LMW) thiol antioxidant. Responsible for the translocation of the substrate across the membrane. Also contains a C-terminal periplasmic solute-binding domain (SBD) which binds to EGT with sub-micromolar affinity. Does not bind glycine betaine, carnitine, choline, proline, or cholate. Plays a role in bile acid tolerance. Dispensable for choline uptake. Probably not involved in betaine, carnitine or choline mediated osmo- or chill tolerance. Plays a role in enhancing virulence in mice. The sequence is that of Probable ergothioneine transporter EgtUBC from Listeria monocytogenes serovar 1/2a (strain ATCC BAA-679 / EGD-e).